A 182-amino-acid polypeptide reads, in one-letter code: NADH-quinone oxidoreductase subunit I (182 aa).

2 consecutive 4Fe-4S ferredoxin-type domains span residues 50–82 and 92–121; these read IILS…LQKA and EFFR…MTPD. Positions 62, 65, 68, 72, 101, 104, 107, and 111 each coordinate [4Fe-4S] cluster.

The protein belongs to the complex I 23 kDa subunit family. In terms of assembly, NDH-1 is composed of 14 different subunits. Subunits NuoA, H, J, K, L, M, N constitute the membrane sector of the complex. Requires [4Fe-4S] cluster as cofactor.

The protein localises to the cell inner membrane. The catalysed reaction is a quinone + NADH + 5 H(+)(in) = a quinol + NAD(+) + 4 H(+)(out). NDH-1 shuttles electrons from NADH, via FMN and iron-sulfur (Fe-S) centers, to quinones in the respiratory chain. The immediate electron acceptor for the enzyme in this species is believed to be ubiquinone. Couples the redox reaction to proton translocation (for every two electrons transferred, four hydrogen ions are translocated across the cytoplasmic membrane), and thus conserves the redox energy in a proton gradient. This Psychrobacter cryohalolentis (strain ATCC BAA-1226 / DSM 17306 / VKM B-2378 / K5) protein is NADH-quinone oxidoreductase subunit I.